The following is a 106-amino-acid chain: uncharacterized protein (106 aa).

The disordered stretch occupies residues Met-1–Ala-46.

This is an uncharacterized protein from Gracula (BFDV).